We begin with the raw amino-acid sequence, 1059 residues long: MPKRKDIQKVLVIGSGPIVIGQAAEFDYSGTQAALSLKEEGYYVILVNSNPATIMTDAEIADKVYIEPLSIDFIERILRKERPDAILPTLGGQTGLNMAKNLSEAGILDELRIELLGTKLSAIEEAEDREEFKALMERLNEPIPESVIATTVEEAVDFADTHGYPVIVRPAYTLGGTGGGIAATHQELVDISANGLELSPVTQVLIERSIAGYKEIEFEVMRDAHDNALVVASMENFDPVGVHTGDSIVTAPVQTLSDREVQMMRDAALKIIRALKIEGGVNIQMALDPQSYKYYIIEVNPRVSRSSALASKATGYPIAKMAAKIAVGLTLDEIINPVTGTTKAEFEPALDYVVFKIPRWPFDKFATADRRLGTQMKATGEVMAIGRNMEEAMLKAVRSLEIGVTGLNDLTFDELSDEALLSALMPARDDRLFMIADLLRRGVSIETIHAKTQIDEFFLDKVSHVVEIERDLSTHVGDIEYLLYAKKNGFADATIAGLWGQTAAEVRKQRHDANVLPVYKMVDTVAAEFESQTPYFYATYERENESVRSKKPSVIVLGSGPIRIGQGVEFDYATVHAVKAIQRAGYEAIIMNSNPETVSTDFSISDKLYFEPLTLEDVLNVIDLEQPLGVVVQFGGQTAINLAQPLEENGVNILGTTVDDLNRAEDREAFDQVIKTLALPQPVGKTATTVDGALNAAQAIGYPVLIRPSYVLGGRAMEIVSSDDELQDYMQRAVKVSNDHPVLIDSYLVGQEAEVDVLSDGETAVIPGIMEHIERAGVHSGDSMSVYPPQYLSQKVQDEMTAAAINLAKAMNTIGLMNVQFVIHDNTAYVIEVNPRASRTVPFISKVTHLPLAQLATRVMLGEKLVDMGFETGLIPADDMVHVKAPIFSFTKLPDVDSLLGPEMKSTGEVMGSDTTLPKALYKAFVASNIKVPQYGNVLFTVADADKAEAINLAKRFNNLGFALFATSGTGAHFAEQNLPVDILDKIAESDNNSVAALRSQRLQVVINTTQADDRAESDGRLIRNAAIENAVPLFTALDTVSAFLDVLESRSFTVNEMK.

The tract at residues 1–401 (MPKRKDIQKV…AMLKAVRSLE (401 aa)) is carboxyphosphate synthetic domain. Residues Arg-129, Arg-169, Gly-175, Gly-176, Arg-208, Ile-210, Glu-215, Gly-241, Val-242, His-243, Gln-284, and Glu-298 each contribute to the ATP site. Positions 133–327 (KALMERLNEP…IAKMAAKIAV (195 aa)) constitute an ATP-grasp 1 domain. Residues Gln-284, Glu-298, and Asn-300 each coordinate Mg(2+). Mn(2+) contacts are provided by Gln-284, Glu-298, and Asn-300. Positions 402–546 (IGVTGLNDLT…YATYERENES (145 aa)) are oligomerization domain. Positions 547-929 (VRSKKPSVIV…ALYKAFVASN (383 aa)) are carbamoyl phosphate synthetic domain. In terms of domain architecture, ATP-grasp 2 spans 671–861 (DQVIKTLALP…LAQLATRVML (191 aa)). Residues Arg-707, Ser-746, Leu-748, Glu-752, Gly-777, Val-778, His-779, Ser-780, Gln-820, and Glu-832 each coordinate ATP. Mg(2+) is bound by residues Gln-820, Glu-832, and Asn-834. The Mn(2+) site is built by Gln-820, Glu-832, and Asn-834. Positions 930–1059 (IKVPQYGNVL…SRSFTVNEMK (130 aa)) constitute an MGS-like domain. The allosteric domain stretch occupies residues 930–1059 (IKVPQYGNVL…SRSFTVNEMK (130 aa)).

It belongs to the CarB family. In terms of assembly, composed of two chains; the small (or glutamine) chain promotes the hydrolysis of glutamine to ammonia, which is used by the large (or ammonia) chain to synthesize carbamoyl phosphate. Tetramer of heterodimers (alpha,beta)4. Requires Mg(2+) as cofactor. Mn(2+) serves as cofactor.

The catalysed reaction is hydrogencarbonate + L-glutamine + 2 ATP + H2O = carbamoyl phosphate + L-glutamate + 2 ADP + phosphate + 2 H(+). The enzyme catalyses hydrogencarbonate + NH4(+) + 2 ATP = carbamoyl phosphate + 2 ADP + phosphate + 2 H(+). Its pathway is amino-acid biosynthesis; L-arginine biosynthesis; carbamoyl phosphate from bicarbonate: step 1/1. It functions in the pathway pyrimidine metabolism; UMP biosynthesis via de novo pathway; (S)-dihydroorotate from bicarbonate: step 1/3. Large subunit of the glutamine-dependent carbamoyl phosphate synthetase (CPSase). CPSase catalyzes the formation of carbamoyl phosphate from the ammonia moiety of glutamine, carbonate, and phosphate donated by ATP, constituting the first step of 2 biosynthetic pathways, one leading to arginine and/or urea and the other to pyrimidine nucleotides. The large subunit (synthetase) binds the substrates ammonia (free or transferred from glutamine from the small subunit), hydrogencarbonate and ATP and carries out an ATP-coupled ligase reaction, activating hydrogencarbonate by forming carboxy phosphate which reacts with ammonia to form carbamoyl phosphate. This chain is Carbamoyl phosphate synthase large chain, found in Leuconostoc citreum (strain KM20).